The primary structure comprises 345 residues: Dihydroorotate dehydrogenase (quinone) (345 aa).

FMN contacts are provided by residues 65–69 (AGLDK) and threonine 89. A substrate-binding site is contributed by lysine 69. 114–118 (NRMGF) is a binding site for substrate. Residues asparagine 142 and asparagine 175 each contribute to the FMN site. Residue asparagine 175 coordinates substrate. Serine 178 (nucleophile) is an active-site residue. Asparagine 180 is a substrate binding site. 2 residues coordinate FMN: lysine 220 and threonine 248. 249–250 (NT) is a binding site for substrate. Residues glycine 271, glycine 300, and 321-322 (YT) each bind FMN.

This sequence belongs to the dihydroorotate dehydrogenase family. Type 2 subfamily. As to quaternary structure, monomer. Requires FMN as cofactor.

The protein resides in the cell membrane. The enzyme catalyses (S)-dihydroorotate + a quinone = orotate + a quinol. Its pathway is pyrimidine metabolism; UMP biosynthesis via de novo pathway; orotate from (S)-dihydroorotate (quinone route): step 1/1. Its function is as follows. Catalyzes the conversion of dihydroorotate to orotate with quinone as electron acceptor. The sequence is that of Dihydroorotate dehydrogenase (quinone) from Burkholderia thailandensis (strain ATCC 700388 / DSM 13276 / CCUG 48851 / CIP 106301 / E264).